We begin with the raw amino-acid sequence, 433 residues long: Enolase (433 aa).

Residue Gln167 coordinates (2R)-2-phosphoglycerate. Residue Glu209 is the Proton donor of the active site. Residues Asp246, Glu291, and Asp318 each contribute to the Mg(2+) site. The (2R)-2-phosphoglycerate site is built by Lys343, Arg372, Ser373, and Lys394. Catalysis depends on Lys343, which acts as the Proton acceptor.

The protein belongs to the enolase family. Component of the RNA degradosome, a multiprotein complex involved in RNA processing and mRNA degradation. It depends on Mg(2+) as a cofactor.

The protein localises to the cytoplasm. It localises to the secreted. It is found in the cell surface. The enzyme catalyses (2R)-2-phosphoglycerate = phosphoenolpyruvate + H2O. The protein operates within carbohydrate degradation; glycolysis; pyruvate from D-glyceraldehyde 3-phosphate: step 4/5. Functionally, catalyzes the reversible conversion of 2-phosphoglycerate (2-PG) into phosphoenolpyruvate (PEP). It is essential for the degradation of carbohydrates via glycolysis. The protein is Enolase of Aeromonas salmonicida (strain A449).